The sequence spans 277 residues: MTDLYAVVGNPIAHSKSPLIHRLFAEQTDQDLVYEALLIDTEDTTFQFAISDLIARGYRGINITVPFKLDAFELADELSPRAEVAHAVNTFSFKDGKIFGDNTDGIGLVTDIEENANRPFKDQKVLILGAGGAVQGILQPLLEKQPGLVHIANRTAKRAEVLGKRFETFSPITSSDWEGIPDQAYDIIINGTSASLEGKLPPINSNVVGQDSLVYDMMYGAEPTIFMQWAQQHQPSCQVRDGLGMLVGQAAEAFYIWRGVRPQTQSVIDEVRRLIQA.

Shikimate-binding positions include 15-17 (SKS) and Thr64. Lys68 serves as the catalytic Proton acceptor. Shikimate contacts are provided by Asn89 and Asp104. NADP(+)-binding positions include 129-133 (GAGGA), 153-158 (NRTAKR), and Met217. Position 219 (Tyr219) interacts with shikimate. Gly242 provides a ligand contact to NADP(+).

This sequence belongs to the shikimate dehydrogenase family. In terms of assembly, homodimer.

It catalyses the reaction shikimate + NADP(+) = 3-dehydroshikimate + NADPH + H(+). The protein operates within metabolic intermediate biosynthesis; chorismate biosynthesis; chorismate from D-erythrose 4-phosphate and phosphoenolpyruvate: step 4/7. Functionally, involved in the biosynthesis of the chorismate, which leads to the biosynthesis of aromatic amino acids. Catalyzes the reversible NADPH linked reduction of 3-dehydroshikimate (DHSA) to yield shikimate (SA). This chain is Shikimate dehydrogenase (NADP(+)), found in Hydrogenovibrio crunogenus (strain DSM 25203 / XCL-2) (Thiomicrospira crunogena).